The sequence spans 91 residues: MGRSLKKGPFADHHLLAKVDKLNESGEKQVIKTWSRRSTIFPEFMGHTFGVHDGRKHVPVFVTEDMVGHKLGEFAPTRTYKGHGSDKKTKR.

It belongs to the universal ribosomal protein uS19 family.

Functionally, protein S19 forms a complex with S13 that binds strongly to the 16S ribosomal RNA. The chain is Small ribosomal subunit protein uS19 from Exiguobacterium sp. (strain ATCC BAA-1283 / AT1b).